A 250-amino-acid polypeptide reads, in one-letter code: Small ribosomal subunit protein uS2 (250 aa).

Belongs to the universal ribosomal protein uS2 family.

The sequence is that of Small ribosomal subunit protein uS2 from Paraburkholderia phytofirmans (strain DSM 17436 / LMG 22146 / PsJN) (Burkholderia phytofirmans).